Here is a 175-residue protein sequence, read N- to C-terminus: Interleukin-10 (175 aa).

Residues 1–21 form the signal peptide; it reads MQTCCQALLLLLAACTLPAHC. Cystine bridges form between cysteine 26–cysteine 123 and cysteine 77–cysteine 129.

It belongs to the IL-10 family. In terms of assembly, homodimer. Interacts with IL10RA and IL10RB. As to expression, expressed predominantly in bursa of Fabricius and cecal tonsils with low levels in thymus, liver and lung.

Its subcellular location is the secreted. Functionally, major immune regulatory cytokine that acts on many cells of the immune system where it has profound anti-inflammatory functions, limiting excessive tissue disruption caused by inflammation. Mechanistically, IL10 binds to its heterotetrameric receptor comprising IL10RA and IL10RB leading to JAK1 and STAT2-mediated phosphorylation of STAT3. In turn, STAT3 translocates to the nucleus where it drives expression of anti-inflammatory mediators. Targets antigen-presenting cells (APCs) such as macrophages and monocytes and inhibits their release of pro-inflammatory cytokines including granulocyte-macrophage colony-stimulating factor /GM-CSF, granulocyte colony-stimulating factor/G-CSF, IL-1 alpha, IL-1 beta, IL-6, IL-8 and TNF-alpha. Also interferes with antigen presentation by reducing the expression of MHC-class II and co-stimulatory molecules, thereby inhibiting their ability to induce T cell activation. In addition, controls the inflammatory response of macrophages by reprogramming essential metabolic pathways including mTOR signaling. This Gallus gallus (Chicken) protein is Interleukin-10.